The primary structure comprises 191 residues: Protein YceI (191 aa).

The N-terminal stretch at methionine 1–alanine 22 is a signal peptide.

Belongs to the UPF0312 family. Type 1 subfamily.

It localises to the periplasm. In Shigella boydii serotype 4 (strain Sb227), this protein is Protein YceI.